We begin with the raw amino-acid sequence, 226 residues long: ATP synthase F(0) complex subunit a (226 aa).

Transmembrane regions (helical) follow at residues Pro-12–Pro-32, Trp-68–Leu-88, Gln-97–Phe-117, Ile-135–Ala-155, Ile-164–Ile-184, and Ala-189–Ile-209.

Belongs to the ATPase A chain family. As to quaternary structure, component of the ATP synthase complex composed at least of ATP5F1A/subunit alpha, ATP5F1B/subunit beta, ATP5MC1/subunit c (homooctomer), MT-ATP6/subunit a, MT-ATP8/subunit 8, ATP5ME/subunit e, ATP5MF/subunit f, ATP5MG/subunit g, ATP5MK/subunit k, ATP5MJ/subunit j, ATP5F1C/subunit gamma, ATP5F1D/subunit delta, ATP5F1E/subunit epsilon, ATP5PF/subunit F6, ATP5PB/subunit b, ATP5PD/subunit d, ATP5PO/subunit OSCP. ATP synthase complex consists of a soluble F(1) head domain (subunits alpha(3) and beta(3)) - the catalytic core - and a membrane F(0) domain - the membrane proton channel (subunits c, a, 8, e, f, g, k and j). These two domains are linked by a central stalk (subunits gamma, delta, and epsilon) rotating inside the F1 region and a stationary peripheral stalk (subunits F6, b, d, and OSCP). Interacts with DNAJC30; interaction is direct.

Its subcellular location is the mitochondrion inner membrane. The enzyme catalyses H(+)(in) = H(+)(out). Its function is as follows. Subunit a, of the mitochondrial membrane ATP synthase complex (F(1)F(0) ATP synthase or Complex V) that produces ATP from ADP in the presence of a proton gradient across the membrane which is generated by electron transport complexes of the respiratory chain. ATP synthase complex consist of a soluble F(1) head domain - the catalytic core - and a membrane F(1) domain - the membrane proton channel. These two domains are linked by a central stalk rotating inside the F(1) region and a stationary peripheral stalk. During catalysis, ATP synthesis in the catalytic domain of F(1) is coupled via a rotary mechanism of the central stalk subunits to proton translocation. With the subunit c (ATP5MC1), forms the proton-conducting channel in the F(0) domain, that contains two crucial half-channels (inlet and outlet) that facilitate proton movement from the mitochondrial intermembrane space (IMS) into the matrix. Protons are taken up via the inlet half-channel and released through the outlet half-channel, following a Grotthuss mechanism. The protein is ATP synthase F(0) complex subunit a of Equus asinus (Donkey).